Here is a 128-residue protein sequence, read N- to C-terminus: Large ribosomal subunit protein bL17 (128 aa).

Belongs to the bacterial ribosomal protein bL17 family. In terms of assembly, part of the 50S ribosomal subunit. Contacts protein L32.

The polypeptide is Large ribosomal subunit protein bL17 (Streptococcus uberis (strain ATCC BAA-854 / 0140J)).